The primary structure comprises 622 residues: Condensin-2 complex subunit H2 (622 aa).

Position 19 is a phosphothreonine (Thr-19). A phosphoserine mark is found at Ser-95, Ser-199, Ser-223, and Ser-227. The segment at 207 to 354 (WNPKEPGRAE…PGQKRKRKGA (148 aa)) is disordered. Residues 262 to 273 (AAEPPEASAPEV) are compositionally biased toward low complexity. Ser-282 is subject to Phosphoserine. Positions 294–312 (TLRERKEAPEPASRLKDTP) are enriched in basic and acidic residues.

This sequence belongs to the CND2 H2 (condensin-2 subunit 2) family. In terms of assembly, component of the condensin-2 complex, which contains the SMC2 and SMC4 heterodimer, and three non SMC subunits, NCAPG2, NCAPH2 and NCAPD3 that probably regulate the complex.

It is found in the nucleus. Its function is as follows. Regulatory subunit of the condensin-2 complex, a complex that seems to provide chromosomes with an additional level of organization and rigidity and in establishing mitotic chromosome architecture. May promote the resolution of double-strand DNA catenanes (intertwines) between sister chromatids. Condensin-mediated compaction likely increases tension in catenated sister chromatids, providing directionality for type II topoisomerase-mediated strand exchanges toward chromatid decatenation. Required for decatenation of chromatin bridges at anaphase. Early in neurogenesis, may play an essential role to ensure accurate mitotic chromosome condensation in neuron stem cells, ultimately affecting neuron pool and cortex size. Seems to have lineage-specific role in T-cell development. This is Condensin-2 complex subunit H2 (NCAPH2) from Bos taurus (Bovine).